Reading from the N-terminus, the 119-residue chain is MRRSLRLQGKKNFSRVYKEGSVVRSDYVVVYFLPASEQRVAVVVSKRFGNAVRRNRIRRLLLEAWQENHDHLPSGYYIILPRSSLLSVEENVWRSKVKELFHEWQWASGKNSPHCSAVL.

The protein belongs to the RnpA family. As to quaternary structure, consists of a catalytic RNA component (M1 or rnpB) and a protein subunit.

It catalyses the reaction Endonucleolytic cleavage of RNA, removing 5'-extranucleotides from tRNA precursor.. In terms of biological role, RNaseP catalyzes the removal of the 5'-leader sequence from pre-tRNA to produce the mature 5'-terminus. It can also cleave other RNA substrates such as 4.5S RNA. The protein component plays an auxiliary but essential role in vivo by binding to the 5'-leader sequence and broadening the substrate specificity of the ribozyme. The chain is Ribonuclease P protein component from Coprothermobacter proteolyticus (strain ATCC 35245 / DSM 5265 / OCM 4 / BT).